The following is a 203-amino-acid chain: Transmembrane emp24 domain-containing protein (203 aa).

The N-terminal stretch at 1-22 (MASIRLLPSCIVLMFLARSSLC) is a signal peptide. At 23 to 170 (YFITIDAHGE…RSINDNTNSR (148 aa)) the chain is on the lumenal side. The region spanning 32 to 114 (EECFHDKVTS…PKVLKFSMDI (83 aa)) is the GOLD domain. Residues 171–191 (VVWWSFFESLVLVAMTLGQVY) traverse the membrane as a helical segment. The Cytoplasmic segment spans residues 192-203 (YLKRFFEVRRVV).

The protein belongs to the EMP24/GP25L family.

It is found in the cytoplasmic vesicle membrane. Functionally, could have a role in the budding of coatomer-coated and other species of coated vesicles. The chain is Transmembrane emp24 domain-containing protein from Nematostella vectensis (Starlet sea anemone).